Here is a 414-residue protein sequence, read N- to C-terminus: Signal recognition particle receptor FtsY (414 aa).

Residues 216 to 223, 298 to 302, and 362 to 365 each bind GTP; these read GVNGVGKT, DTAGR, and TKLD.

This sequence belongs to the GTP-binding SRP family. FtsY subfamily. Part of the signal recognition particle protein translocation system, which is composed of SRP and FtsY. SRP is a ribonucleoprotein composed of Ffh and a 4.5S RNA molecule.

Its subcellular location is the cell inner membrane. It localises to the cytoplasm. It catalyses the reaction GTP + H2O = GDP + phosphate + H(+). In terms of biological role, involved in targeting and insertion of nascent membrane proteins into the cytoplasmic membrane. Acts as a receptor for the complex formed by the signal recognition particle (SRP) and the ribosome-nascent chain (RNC). Interaction with SRP-RNC leads to the transfer of the RNC complex to the Sec translocase for insertion into the membrane, the hydrolysis of GTP by both Ffh and FtsY, and the dissociation of the SRP-FtsY complex into the individual components. The sequence is that of Signal recognition particle receptor FtsY from Haemophilus influenzae (strain ATCC 51907 / DSM 11121 / KW20 / Rd).